A 495-amino-acid chain; its full sequence is Bifunctional protein GlmU (495 aa).

Residues 1–241 (MPQQTAVVVL…AAKVTGVNDR (241 aa)) form a pyrophosphorylase region. UDP-N-acetyl-alpha-D-glucosamine-binding positions include 10-13 (LAAG), Lys-24, Gln-81, and 86-87 (GT). Asp-112 is a binding site for Mg(2+). Gly-151, Glu-166, Asn-181, and Asn-239 together coordinate UDP-N-acetyl-alpha-D-glucosamine. Residue Asn-239 participates in Mg(2+) binding. Residues 242-262 (VQLSIATRTMNRYILERHMRA) are linker. Positions 263 to 495 (GVTIIDPAST…QATEQKDGEQ (233 aa)) are N-acetyltransferase. Residues Arg-344 and Lys-362 each coordinate UDP-N-acetyl-alpha-D-glucosamine. His-374 functions as the Proton acceptor in the catalytic mechanism. Residues Tyr-377 and Asn-388 each contribute to the UDP-N-acetyl-alpha-D-glucosamine site. Acetyl-CoA is bound by residues Ala-391, 397–398 (NY), Ser-416, and Ala-434. The interval 467-495 (GTAAATAAAQALAADEKSSQATEQKDGEQ) is disordered. Over residues 468-479 (TAAATAAAQALA) the composition is skewed to low complexity. Over residues 480 to 495 (ADEKSSQATEQKDGEQ) the composition is skewed to basic and acidic residues.

In the N-terminal section; belongs to the N-acetylglucosamine-1-phosphate uridyltransferase family. The protein in the C-terminal section; belongs to the transferase hexapeptide repeat family. As to quaternary structure, homotrimer. Requires Mg(2+) as cofactor.

The protein resides in the cytoplasm. The enzyme catalyses alpha-D-glucosamine 1-phosphate + acetyl-CoA = N-acetyl-alpha-D-glucosamine 1-phosphate + CoA + H(+). It catalyses the reaction N-acetyl-alpha-D-glucosamine 1-phosphate + UTP + H(+) = UDP-N-acetyl-alpha-D-glucosamine + diphosphate. It functions in the pathway nucleotide-sugar biosynthesis; UDP-N-acetyl-alpha-D-glucosamine biosynthesis; N-acetyl-alpha-D-glucosamine 1-phosphate from alpha-D-glucosamine 6-phosphate (route II): step 2/2. The protein operates within nucleotide-sugar biosynthesis; UDP-N-acetyl-alpha-D-glucosamine biosynthesis; UDP-N-acetyl-alpha-D-glucosamine from N-acetyl-alpha-D-glucosamine 1-phosphate: step 1/1. It participates in bacterial outer membrane biogenesis; LPS lipid A biosynthesis. In terms of biological role, catalyzes the last two sequential reactions in the de novo biosynthetic pathway for UDP-N-acetylglucosamine (UDP-GlcNAc). The C-terminal domain catalyzes the transfer of acetyl group from acetyl coenzyme A to glucosamine-1-phosphate (GlcN-1-P) to produce N-acetylglucosamine-1-phosphate (GlcNAc-1-P), which is converted into UDP-GlcNAc by the transfer of uridine 5-monophosphate (from uridine 5-triphosphate), a reaction catalyzed by the N-terminal domain. This Nocardia farcinica (strain IFM 10152) protein is Bifunctional protein GlmU.